A 310-amino-acid chain; its full sequence is Cytochrome f (310 aa).

The signal sequence occupies residues 1 to 23 (MRRLIPILLGSLVLSLSILVAPA). Residues Tyr-28, Cys-48, Cys-51, and His-52 each contribute to the heme site. The chain crosses the membrane as a helical span at residues 277–297 (IYGLLAFFVAVSLAQILLVLK).

Belongs to the cytochrome f family. As to quaternary structure, the 4 large subunits of the cytochrome b6-f complex are cytochrome b6, subunit IV (17 kDa polypeptide, PetD), cytochrome f and the Rieske protein, while the 4 small subunits are PetG, PetL, PetM and PetN. The complex functions as a dimer. It depends on heme as a cofactor.

It localises to the cellular thylakoid membrane. In terms of biological role, component of the cytochrome b6-f complex, which mediates electron transfer between photosystem II (PSII) and photosystem I (PSI), cyclic electron flow around PSI, and state transitions. This chain is Cytochrome f, found in Prochlorococcus marinus (strain MIT 9313).